The following is a 417-amino-acid chain: Serine hydroxymethyltransferase (417 aa).

Residues Leu-116 and 120–122 (GHL) each bind (6S)-5,6,7,8-tetrahydrofolate. N6-(pyridoxal phosphate)lysine is present on Lys-225.

Belongs to the SHMT family. As to quaternary structure, homodimer. Pyridoxal 5'-phosphate serves as cofactor.

The protein resides in the cytoplasm. It catalyses the reaction (6R)-5,10-methylene-5,6,7,8-tetrahydrofolate + glycine + H2O = (6S)-5,6,7,8-tetrahydrofolate + L-serine. The protein operates within one-carbon metabolism; tetrahydrofolate interconversion. Its pathway is amino-acid biosynthesis; glycine biosynthesis; glycine from L-serine: step 1/1. Catalyzes the reversible interconversion of serine and glycine with tetrahydrofolate (THF) serving as the one-carbon carrier. This reaction serves as the major source of one-carbon groups required for the biosynthesis of purines, thymidylate, methionine, and other important biomolecules. Also exhibits THF-independent aldolase activity toward beta-hydroxyamino acids, producing glycine and aldehydes, via a retro-aldol mechanism. The polypeptide is Serine hydroxymethyltransferase (Hydrogenobaculum sp. (strain Y04AAS1)).